The sequence spans 393 residues: Iripin-3 (393 aa).

Positions 1–16 are cleaved as a signal peptide; that stretch reads MKVITAFLSVFVLCSA. N-linked (GlcNAc...) asparagine glycosylation is found at Asn-104 and Asn-265.

This sequence belongs to the serpin family. In terms of assembly, interacts with human KLKB1. Interacts with human ST14. Interacts with human F2 (thrombin). As to expression, saliva (at protein level). Expressed in salivary gland. Expressed in ovary during blood feeding.

The protein localises to the secreted. In terms of biological role, serine protease inhibitor that modulates blood feeding of ticks on vertebrate species. Moderately inhibits host plasma kallikrein (KLKB1), matriptase (ST14), trypsin, plasmin (PLG), thrombin (F2) and coagulation factor VIIa (F7). Slightly inhibits host alpha-chymotrypsin, tPA/tissue-type plasminogen activator (PLAT), uPA/urokinase-type plasminogen activator (PLAU) and coagulation factor XIIa (F12). Slightly inhibits the extrinsic pathway while not affecting the intrinsic and common pathways of host blood coagulation. Decreases synthesis and secretion of IL6 by mouse bone marrow-derived macrophages. Decreases viability of mouse B- and T-cells. Decreases proliferation of mouse CD4+ T-cells in response to stimulation. Inhibits Th1 immune responses in mouse cells. Promotes differentiation of mouse regulatory T-cells. The sequence is that of Iripin-3 from Ixodes ricinus (Common tick).